Consider the following 115-residue polypeptide: Large ribosomal subunit protein P2 (115 aa).

At methionine 1 the chain carries N-acetylmethionine. Phosphoserine occurs at positions 17 and 19. Residue lysine 21 is modified to N6-acetyllysine; alternate. Lysine 21 bears the N6-succinyllysine; alternate mark. Positions 76-90 (APGSAAPAAGSAPAA) are enriched in low complexity. Positions 76–115 (APGSAAPAAGSAPAAAEEKKEEKKEESEESDDDMGFGLFD) are disordered. Residues serine 79 and serine 86 each carry the phosphoserine modification. Basic and acidic residues predominate over residues 91–101 (AEEKKEEKKEE). Phosphoserine occurs at positions 102 and 105.

It belongs to the eukaryotic ribosomal protein P1/P2 family. Heterodimer with RPLP1 at the lateral ribosomal stalk of the large ribosomal subunit.

Plays an important role in the elongation step of protein synthesis. The sequence is that of Large ribosomal subunit protein P2 (RPLP2) from Bos taurus (Bovine).